The primary structure comprises 132 residues: Small ribosomal subunit protein uS12 (132 aa).

At Asp-89 the chain carries 3-methylthioaspartic acid. Residues 101–132 (TLDASGAAGPSSTNKATRNRKRSKYGVKRPKA) are disordered. The segment covering 117-132 (TRNRKRSKYGVKRPKA) has biased composition (basic residues).

This sequence belongs to the universal ribosomal protein uS12 family. In terms of assembly, part of the 30S ribosomal subunit. Contacts proteins S8 and S17. May interact with IF1 in the 30S initiation complex.

With S4 and S5 plays an important role in translational accuracy. Functionally, interacts with and stabilizes bases of the 16S rRNA that are involved in tRNA selection in the A site and with the mRNA backbone. Located at the interface of the 30S and 50S subunits, it traverses the body of the 30S subunit contacting proteins on the other side and probably holding the rRNA structure together. The combined cluster of proteins S8, S12 and S17 appears to hold together the shoulder and platform of the 30S subunit. This is Small ribosomal subunit protein uS12 from Sorangium cellulosum (strain So ce56) (Polyangium cellulosum (strain So ce56)).